A 646-amino-acid polypeptide reads, in one-letter code: Interferon-induced GTP-binding protein MxA (646 aa).

Residues D34–P307 form the Dynamin-type G domain. Residues G44–S51 form a G1 motif region. G44–S51 serves as a coordination point for GTP. A G2 motif region spans residues V69–R71. Residues D145 to G148 form a G3 motif region. Residues D145–I149 and T214–D217 contribute to the GTP site. A G4 motif region spans residues T214–D217. The segment at R246 to G249 is G5 motif. The 92-residue stretch at L546 to F637 folds into the GED domain.

Belongs to the TRAFAC class dynamin-like GTPase superfamily. Dynamin/Fzo/YdjA family.

Its subcellular location is the cytoplasm. This is Interferon-induced GTP-binding protein MxA (mxa) from Danio rerio (Zebrafish).